The chain runs to 296 residues: Protoheme IX farnesyltransferase (296 aa).

Helical transmembrane passes span 29-49, 54-74, 98-118, 121-141, 147-167, 175-195, 221-241, 246-266, and 275-295; these read LSGLVIVTSAGGLALAPGHVA, ALTVLATAAVVGAANALNCWM, FTALGLGIMVPVFALPVLALV, PLTAALAFVALVTYVAVYTPM, LALLVGAVPGAIPPLMGWTAA, GLALFALLFAWQLPHFLAVSI, WIAATAAALVPVSLLLVPLRV, YGAVAAVLGVALAGYAFAGVG, and NFFLATILYLTLLFVALFLGA.

This sequence belongs to the UbiA prenyltransferase family. Protoheme IX farnesyltransferase subfamily.

It localises to the cell inner membrane. It carries out the reaction heme b + (2E,6E)-farnesyl diphosphate + H2O = Fe(II)-heme o + diphosphate. Its pathway is porphyrin-containing compound metabolism; heme O biosynthesis; heme O from protoheme: step 1/1. Functionally, converts heme B (protoheme IX) to heme O by substitution of the vinyl group on carbon 2 of heme B porphyrin ring with a hydroxyethyl farnesyl side group. The sequence is that of Protoheme IX farnesyltransferase from Anaeromyxobacter sp. (strain Fw109-5).